Consider the following 353-residue polypeptide: Photosystem II D2 protein (353 aa).

Thr-2 bears the N-acetylthreonine mark. Thr-2 is subject to Phosphothreonine. Residues Cys-41–Thr-61 traverse the membrane as a helical segment. Residue His-118 coordinates chlorophyll a. A helical membrane pass occupies residues Gly-125–Pro-141. 2 residues coordinate pheophytin a: Gln-130 and Asn-143. A helical membrane pass occupies residues Val-153–Ser-166. Residue His-198 participates in chlorophyll a binding. The chain crosses the membrane as a helical span at residues Ala-208–Asp-228. Positions 215 and 262 each coordinate a plastoquinone. Residue His-215 participates in Fe cation binding. Residue His-269 participates in Fe cation binding. The chain crosses the membrane as a helical span at residues Gly-279–Arg-295.

This sequence belongs to the reaction center PufL/M/PsbA/D family. PSII is composed of 1 copy each of membrane proteins PsbA, PsbB, PsbC, PsbD, PsbE, PsbF, PsbH, PsbI, PsbJ, PsbK, PsbL, PsbM, PsbT, PsbX, PsbY, PsbZ, Psb30/Ycf12, at least 3 peripheral proteins of the oxygen-evolving complex and a large number of cofactors. It forms dimeric complexes. The D1/D2 heterodimer binds P680, chlorophylls that are the primary electron donor of PSII, and subsequent electron acceptors. It shares a non-heme iron and each subunit binds pheophytin, quinone, additional chlorophylls, carotenoids and lipids. There is also a Cl(-1) ion associated with D1 and D2, which is required for oxygen evolution. The PSII complex binds additional chlorophylls, carotenoids and specific lipids. serves as cofactor.

The protein localises to the plastid. It is found in the chloroplast thylakoid membrane. The enzyme catalyses 2 a plastoquinone + 4 hnu + 2 H2O = 2 a plastoquinol + O2. Its function is as follows. Photosystem II (PSII) is a light-driven water:plastoquinone oxidoreductase that uses light energy to abstract electrons from H(2)O, generating O(2) and a proton gradient subsequently used for ATP formation. It consists of a core antenna complex that captures photons, and an electron transfer chain that converts photonic excitation into a charge separation. The D1/D2 (PsbA/PsbD) reaction center heterodimer binds P680, the primary electron donor of PSII as well as several subsequent electron acceptors. D2 is needed for assembly of a stable PSII complex. The sequence is that of Photosystem II D2 protein from Populus trichocarpa (Western balsam poplar).